A 508-amino-acid polypeptide reads, in one-letter code: BICD family-like cargo adapter 2 (508 aa).

Over residues M1 to G22 the composition is skewed to low complexity. 3 disordered regions span residues M1–F27, L132–E152, and A300–S351. 2 coiled-coil regions span residues A64–A300 and A353–V458. Over residues Q135 to A149 the composition is skewed to basic and acidic residues. The disordered stretch occupies residues K470–R491. Positions S473–S489 are enriched in low complexity.

The protein belongs to the BICDR family. Interacts with RAB13.

The chain is BICD family-like cargo adapter 2 (BICDL2) from Homo sapiens (Human).